Reading from the N-terminus, the 150-residue chain is Protein Turandot X (150 aa).

The N-terminal stretch at 1-22 (MGLHIGSLLICVFLGILPFATA) is a signal peptide. The segment at 127-150 (REEGQSNHANSPTTLPSRIQKMTK) is disordered. Residues 132 to 150 (SNHANSPTTLPSRIQKMTK) show a composition bias toward polar residues.

Belongs to the Turandot family.

The protein localises to the secreted. A humoral factor that may play a role in stress tolerance. This chain is Protein Turandot X, found in Drosophila simulans (Fruit fly).